The chain runs to 515 residues: Fatty acyl-CoA reductase 1 (515 aa).

At 1–465 (MLSIPEFYQG…ARKHLNKLRN (465 aa)) the chain is on the cytoplasmic side. Residues 466 to 484 (IRYGFNTILVVLIWRVFIA) form a helical membrane-spanning segment. Residues 485 to 515 (RSQMARNIWYFVVSMCFKFLSYFRASSTMRY) are Peroxisomal-facing.

Belongs to the fatty acyl-CoA reductase family.

It is found in the peroxisome membrane. It catalyses the reaction a long-chain fatty acyl-CoA + 2 NADPH + 2 H(+) = a long-chain primary fatty alcohol + 2 NADP(+) + CoA. The catalysed reaction is hexadecanoyl-CoA + 2 NADPH + 2 H(+) = hexadecan-1-ol + 2 NADP(+) + CoA. It carries out the reaction octadecanoyl-CoA + 2 NADPH + 2 H(+) = octadecan-1-ol + 2 NADP(+) + CoA. The enzyme catalyses (9Z)-octadecenoyl-CoA + 2 NADPH + 2 H(+) = (9Z)-octadecen-1-ol + 2 NADP(+) + CoA. It catalyses the reaction (9Z,12Z)-octadecadienoyl-CoA + 2 NADPH + 2 H(+) = (9Z,12Z)-octadecadien-1-ol + 2 NADP(+) + CoA. The catalysed reaction is eicosanoyl-CoA + 2 NADPH + 2 H(+) = eicosan-1-ol + 2 NADP(+) + CoA. It carries out the reaction 16-methylheptadecanoyl-CoA + 2 NADPH + 2 H(+) = 16-methylheptadecan-1-ol + 2 NADP(+) + CoA. The enzyme catalyses 18-methylnonadecanoyl-CoA + 2 NADPH + 2 H(+) = 18-methylnonadecan-1-ol + 2 NADP(+) + CoA. Functionally, catalyzes the reduction of saturated and unsaturated C16 or C18 fatty acyl-CoA to fatty alcohols. It plays an essential role in the production of ether lipids/plasmalogens which synthesis requires fatty alcohols. In parallel, it is also required for wax monoesters production since fatty alcohols also constitute a substrate for their synthesis. The polypeptide is Fatty acyl-CoA reductase 1 (far1) (Xenopus laevis (African clawed frog)).